Reading from the N-terminus, the 640-residue chain is Chaperone protein HtpG (640 aa).

Residues 1-343 (MQTAENIEHL…SSDLPLNVSR (343 aa)) are a; substrate-binding. The segment at 344–564 (EILQESKDID…THDVSGNLGR (221 aa)) is b. A c region spans residues 565 to 640 (LLKSAGQKVP…LLLQNILSGK (76 aa)).

It belongs to the heat shock protein 90 family. In terms of assembly, homodimer.

It localises to the cytoplasm. Molecular chaperone. Has ATPase activity. In Nitrosomonas europaea (strain ATCC 19718 / CIP 103999 / KCTC 2705 / NBRC 14298), this protein is Chaperone protein HtpG.